A 144-amino-acid chain; its full sequence is Ribosomal RNA large subunit methyltransferase H (144 aa).

Residues Leu63, Gly92, and Leu111–Phe116 contribute to the S-adenosyl-L-methionine site.

It belongs to the RNA methyltransferase RlmH family. As to quaternary structure, homodimer.

The protein resides in the cytoplasm. The catalysed reaction is pseudouridine(1915) in 23S rRNA + S-adenosyl-L-methionine = N(3)-methylpseudouridine(1915) in 23S rRNA + S-adenosyl-L-homocysteine + H(+). Specifically methylates the pseudouridine at position 1915 (m3Psi1915) in 23S rRNA. The protein is Ribosomal RNA large subunit methyltransferase H of Parasynechococcus marenigrum (strain WH8102).